Here is a 321-residue protein sequence, read N- to C-terminus: Olfactory receptor 56B34 (321 aa).

Topologically, residues 1-36 (MGTALHETNSSEVHVSEFILLGFPGIHEFQIWLSLP) are extracellular. Residues 37-57 (MALLYIVALGANLLILITIYL) traverse the membrane as a helical segment. At 58–70 (EPTLHQPMYQFLG) the chain is on the cytoplasmic side. Residues 71–91 (ILAAVDIGLATTSMPKILAIL) form a helical membrane-spanning segment. At 92-105 (WFDAKTISLPECFA) the chain is on the extracellular side. The cysteines at positions 103 and 185 are disulfide-linked. The chain crosses the membrane as a helical span at residues 106 to 126 (QIYAIHTFMCMESGVFLCMAI). Residues 127–128 (DR) lie on the Cytoplasmic side of the membrane. A helical transmembrane segment spans residues 129–149 (YVAICYPLQYPSIVTEAFVIK). The Extracellular portion of the chain corresponds to 150-207 (ATLSMLLRNGLLTIPVPVLAAQRQYCSRNEIDHCLCSNLGVISLACDDITVNRFYQLA). A helical transmembrane segment spans residues 208-228 (LAWLVVGSDMILVYASYALII). The Cytoplasmic portion of the chain corresponds to 229-250 (RSVLRLNSTEAASKALSTCSSH). Residues 251–271 (LILIMFYYTAIVIVSVTHLAG) form a helical membrane-spanning segment. Residues 272-275 (RRVP) lie on the Extracellular side of the membrane. A helical membrane pass occupies residues 276-296 (LIPVLLNVMHIVIPPSLNPVV). Residues 297 to 321 (YALRTQELKVGFRKVFSLSEFVSRK) lie on the Cytoplasmic side of the membrane.

It belongs to the G-protein coupled receptor 1 family.

It localises to the cell membrane. Functionally, odorant receptor. In Mus musculus (Mouse), this protein is Olfactory receptor 56B34.